We begin with the raw amino-acid sequence, 291 residues long: Phosphoribulokinase (291 aa).

Position 12–20 (12–20 (GSSGAGTTS)) interacts with ATP.

Belongs to the phosphoribulokinase family. In terms of assembly, homooctamer.

The enzyme catalyses D-ribulose 5-phosphate + ATP = D-ribulose 1,5-bisphosphate + ADP + H(+). The protein operates within carbohydrate biosynthesis; Calvin cycle. The polypeptide is Phosphoribulokinase (cbbP) (Xanthobacter flavus).